Here is a 544-residue protein sequence, read N- to C-terminus: Chaperonin GroEL 3 (544 aa).

Residues Thr30 to Pro33, Lys51, Asp87 to Thr91, Gly415, and Asp496 contribute to the ATP site.

This sequence belongs to the chaperonin (HSP60) family. As to quaternary structure, forms a cylinder of 14 subunits composed of two heptameric rings stacked back-to-back. Interacts with the co-chaperonin GroES.

The protein resides in the cytoplasm. The catalysed reaction is ATP + H2O + a folded polypeptide = ADP + phosphate + an unfolded polypeptide.. Functionally, together with its co-chaperonin GroES, plays an essential role in assisting protein folding. The GroEL-GroES system forms a nano-cage that allows encapsulation of the non-native substrate proteins and provides a physical environment optimized to promote and accelerate protein folding. The protein is Chaperonin GroEL 3 of Rhizobium meliloti (strain 1021) (Ensifer meliloti).